Reading from the N-terminus, the 30-residue chain is V-type proton ATPase catalytic subunit A isoform 1 (30 aa).

This sequence belongs to the ATPase alpha/beta chains family. V-ATPase is a heteromultimeric enzyme composed of a peripheral catalytic V1 complex (main components: subunits A, B, C, D, E, and F) attached to an integral membrane V0 proton pore complex (main component: the proteolipid protein).

It carries out the reaction ATP + H2O + 4 H(+)(in) = ADP + phosphate + 5 H(+)(out). In terms of biological role, catalytic subunit of the peripheral V1 complex of vacuolar ATPase. V-ATPase vacuolar ATPase is responsible for acidifying a variety of intracellular compartments in eukaryotic cells. In Equisetum arvense (Field horsetail), this protein is V-type proton ATPase catalytic subunit A isoform 1.